The sequence spans 156 residues: Superoxide dismutase [Cu-Zn] 2 (156 aa).

The Cu cation site is built by histidine 47, histidine 49, and histidine 64. Cysteine 58 and cysteine 147 are disulfide-bonded. Positions 64, 72, 81, and 84 each coordinate Zn(2+). Histidine 121 lines the Cu cation pocket.

Belongs to the Cu-Zn superoxide dismutase family. In terms of assembly, homodimer. Cu cation is required as a cofactor. Requires Zn(2+) as cofactor.

It is found in the cytoplasm. The enzyme catalyses 2 superoxide + 2 H(+) = H2O2 + O2. Functionally, destroys radicals which are normally produced within the cells and which are toxic to biological systems. The protein is Superoxide dismutase [Cu-Zn] 2 (SODCC.2) of Mesembryanthemum crystallinum (Common ice plant).